The following is a 363-amino-acid chain: NAD(P)H-quinone oxidoreductase subunit 1, chloroplastic (363 aa).

Helical transmembrane passes span 30-50, 98-118, 129-149, 165-185, 203-223, 248-268, 269-289, 300-320, and 334-354; these read LVPILSLVLGITLGVLVIVWL, FSIGPSIAVISILLSYSVIPF, IGVFLWIAVSSIAPIGLLMSG, AAQSISYEIPLTLCLLSISLL, LWGWNLWRQPIGFLVFLISSL, YSGIKFGLFYVASYLNLLVSS, LFVTVLYLGGWNISISYIFVP, VFGTTIGIFTTLAKTYLFLFI, and DQLLNLGWKFLLPISLGNLLL.

This sequence belongs to the complex I subunit 1 family. As to quaternary structure, NDH is composed of at least 16 different subunits, 5 of which are encoded in the nucleus.

It localises to the plastid. The protein resides in the chloroplast thylakoid membrane. It catalyses the reaction a plastoquinone + NADH + (n+1) H(+)(in) = a plastoquinol + NAD(+) + n H(+)(out). The enzyme catalyses a plastoquinone + NADPH + (n+1) H(+)(in) = a plastoquinol + NADP(+) + n H(+)(out). In terms of biological role, NDH shuttles electrons from NAD(P)H:plastoquinone, via FMN and iron-sulfur (Fe-S) centers, to quinones in the photosynthetic chain and possibly in a chloroplast respiratory chain. The immediate electron acceptor for the enzyme in this species is believed to be plastoquinone. Couples the redox reaction to proton translocation, and thus conserves the redox energy in a proton gradient. In Oenothera elata subsp. hookeri (Hooker's evening primrose), this protein is NAD(P)H-quinone oxidoreductase subunit 1, chloroplastic.